We begin with the raw amino-acid sequence, 308 residues long: General transcription factor IIH subunit 3 (308 aa).

Residues 268–285 (CSVCLSIFCNFSPICTTC) form a C4-type zinc finger.

It belongs to the TFB4 family. In terms of assembly, part of a TFIID-containing RNA polymerase II pre-initiation complex that is composed of TBP and at least GTF2A1, GTF2A2, GTF2E1, GTF2E2, GTF2F1, GTF2H2, GTF2H3, GTF2H4, GTF2H5, GTF2B, TCEA1, ERCC2, ERCC3, TAF1, TAF2, TAF3, TAF4, TAF5, TAF6, TAF7, TAF8, TAF9, TAF10, TAF11, TAF12 and TAF13. Component of the 7-subunit TFIIH core complex composed of XPB/ERCC3, XPD/ERCC2, GTF2H1, GTF2H2, GTF2H3, GTF2H4 and GTF2H5, which is active in NER. The core complex associates with the 3-subunit CDK-activating kinase (CAK) module composed of CCNH/cyclin H, CDK7 and MNAT1 to form the 10-subunit holoenzyme (holo-TFIIH) active in transcription. Interacts with RARA; the interaction requires prior phosphorylation of RARA on 'Ser-369' which then enhances interaction of RARA with CDK7.

It localises to the nucleus. Component of the general transcription and DNA repair factor IIH (TFIIH) core complex, which is involved in general and transcription-coupled nucleotide excision repair (NER) of damaged DNA and, when complexed to CAK, in RNA transcription by RNA polymerase II. In NER, TFIIH acts by opening DNA around the lesion to allow the excision of the damaged oligonucleotide and its replacement by a new DNA fragment. In transcription, TFIIH has an essential role in transcription initiation. When the pre-initiation complex (PIC) has been established, TFIIH is required for promoter opening and promoter escape. Phosphorylation of the C-terminal tail (CTD) of the largest subunit of RNA polymerase II by the kinase module CAK controls the initiation of transcription. This Homo sapiens (Human) protein is General transcription factor IIH subunit 3 (GTF2H3).